Here is a 128-residue protein sequence, read N- to C-terminus: MREGDSGYFSCYDGNRFRLVILASQRAHELSSGACTAVARKGDKNTVVALREIVGEQLDLAAVFKLAVNRCRKYLEEFTNAREVAAARSSQAAPKSAPGQEIGKSFREKDPSAAAFLDQEQFFSGGGE.

The disordered stretch occupies residues 87 to 106 (ARSSQAAPKSAPGQEIGKSF).

It belongs to the RNA polymerase subunit omega family. As to quaternary structure, the RNAP catalytic core consists of 2 alpha, 1 beta, 1 beta' and 1 omega subunit. When a sigma factor is associated with the core the holoenzyme is formed, which can initiate transcription.

The enzyme catalyses RNA(n) + a ribonucleoside 5'-triphosphate = RNA(n+1) + diphosphate. Functionally, promotes RNA polymerase assembly. Latches the N- and C-terminal regions of the beta' subunit thereby facilitating its interaction with the beta and alpha subunits. The chain is DNA-directed RNA polymerase subunit omega from Anaplasma marginale (strain Florida).